Reading from the N-terminus, the 410-residue chain is Cysteine desulfurase IscS (410 aa).

Pyridoxal 5'-phosphate is bound by residues 80–81 (AT), Asn160, Gln188, and 208–210 (SGH). Position 211 is an N6-(pyridoxal phosphate)lysine (Lys211). Thr248 serves as a coordination point for pyridoxal 5'-phosphate. The active-site Cysteine persulfide intermediate is Cys334. Cys334 contacts [2Fe-2S] cluster.

This sequence belongs to the class-V pyridoxal-phosphate-dependent aminotransferase family. NifS/IscS subfamily. Homodimer. Forms a heterotetramer with IscU, interacts with other sulfur acceptors. Pyridoxal 5'-phosphate serves as cofactor.

The protein localises to the cytoplasm. The enzyme catalyses (sulfur carrier)-H + L-cysteine = (sulfur carrier)-SH + L-alanine. Its pathway is cofactor biosynthesis; iron-sulfur cluster biosynthesis. Master enzyme that delivers sulfur to a number of partners involved in Fe-S cluster assembly, tRNA modification or cofactor biosynthesis. Catalyzes the removal of elemental sulfur atoms from cysteine to produce alanine. Functions as a sulfur delivery protein for Fe-S cluster synthesis onto IscU, an Fe-S scaffold assembly protein, as well as other S acceptor proteins. The protein is Cysteine desulfurase IscS of Rickettsia typhi (strain ATCC VR-144 / Wilmington).